A 188-amino-acid polypeptide reads, in one-letter code: Segregation and condensation protein B (188 aa).

This sequence belongs to the ScpB family. As to quaternary structure, homodimer. Homodimerization may be required to stabilize the binding of ScpA to the Smc head domains. Component of a cohesin-like complex composed of ScpA, ScpB and the Smc homodimer, in which ScpA and ScpB bind to the head domain of Smc. The presence of the three proteins is required for the association of the complex with DNA.

The protein resides in the cytoplasm. Its function is as follows. Participates in chromosomal partition during cell division. May act via the formation of a condensin-like complex containing Smc and ScpA that pull DNA away from mid-cell into both cell halves. The sequence is that of Segregation and condensation protein B from Lactococcus lactis subsp. lactis (strain IL1403) (Streptococcus lactis).